A 252-amino-acid polypeptide reads, in one-letter code: MQIVAIIPARYGSTRFPGKALADLAGKPMIQHVYEQTIRASLVSRAIVATDDRRIADVIHQIGGEAIMTSTDHETGTDRLAEVARGLDADIIVNVQGDEPLIDPAMINQAIEPFLGNPGLKMGTLKSRVKCLHDFLSPNVVKVVTDNNGYALYFSRSPLPFFRDKWQDLKDEAFASGRLLCFKHVGLYVYQRNFLLEYAAMPQTFLELSEKLEQLRALENGIRIRVVETEFESLGVDTPDDLNKAKERMKQG.

It belongs to the KdsB family.

The protein localises to the cytoplasm. It carries out the reaction 3-deoxy-alpha-D-manno-oct-2-ulosonate + CTP = CMP-3-deoxy-beta-D-manno-octulosonate + diphosphate. The protein operates within nucleotide-sugar biosynthesis; CMP-3-deoxy-D-manno-octulosonate biosynthesis; CMP-3-deoxy-D-manno-octulosonate from 3-deoxy-D-manno-octulosonate and CTP: step 1/1. It functions in the pathway bacterial outer membrane biogenesis; lipopolysaccharide biosynthesis. Its function is as follows. Activates KDO (a required 8-carbon sugar) for incorporation into bacterial lipopolysaccharide in Gram-negative bacteria. The chain is 3-deoxy-manno-octulosonate cytidylyltransferase from Trichlorobacter lovleyi (strain ATCC BAA-1151 / DSM 17278 / SZ) (Geobacter lovleyi).